Reading from the N-terminus, the 292-residue chain is tRNA (adenine(9)-N1)-methyltransferase (292 aa).

The SAM-dependent MTase TRM10-type domain maps to 72–253 (TFRKGGKKVS…ISLQSKSDKI (182 aa)).

The protein belongs to the class IV-like SAM-binding methyltransferase superfamily. TRM10 family.

It localises to the cytoplasm. It catalyses the reaction adenosine(9) in tRNA + S-adenosyl-L-methionine = N(1)-methyladenosine(9) in tRNA + S-adenosyl-L-homocysteine + H(+). Its function is as follows. Catalyzes the S-adenosyl-L-methionine-dependent formation of N(1)-methyladenine at position 9 (m1A9) in tRNA. The protein is tRNA (adenine(9)-N1)-methyltransferase of Sulfolobus acidocaldarius (strain ATCC 33909 / DSM 639 / JCM 8929 / NBRC 15157 / NCIMB 11770).